We begin with the raw amino-acid sequence, 199 residues long: Holliday junction branch migration complex subunit RuvA (199 aa).

Residues 1–63 form a domain I region; it reads MIDYIKGNLV…EDSQRLFGFT (63 aa). The interval 64 to 142 is domain II; that stretch reads TRTERLLFEK…DMAPMLEPAA (79 aa). The interval 143 to 153 is flexible linker; it reads GADKQQKNPQL. The tract at residues 153–199 is domain III; that stretch reads LEDALEALRALGYVEKELKKVEKQLKAETLETDEYIRRALALMLKRP.

This sequence belongs to the RuvA family. Homotetramer. Forms an RuvA(8)-RuvB(12)-Holliday junction (HJ) complex. HJ DNA is sandwiched between 2 RuvA tetramers; dsDNA enters through RuvA and exits via RuvB. An RuvB hexamer assembles on each DNA strand where it exits the tetramer. Each RuvB hexamer is contacted by two RuvA subunits (via domain III) on 2 adjacent RuvB subunits; this complex drives branch migration. In the full resolvosome a probable DNA-RuvA(4)-RuvB(12)-RuvC(2) complex forms which resolves the HJ.

It localises to the cytoplasm. In terms of biological role, the RuvA-RuvB-RuvC complex processes Holliday junction (HJ) DNA during genetic recombination and DNA repair, while the RuvA-RuvB complex plays an important role in the rescue of blocked DNA replication forks via replication fork reversal (RFR). RuvA specifically binds to HJ cruciform DNA, conferring on it an open structure. The RuvB hexamer acts as an ATP-dependent pump, pulling dsDNA into and through the RuvAB complex. HJ branch migration allows RuvC to scan DNA until it finds its consensus sequence, where it cleaves and resolves the cruciform DNA. This Shouchella clausii (strain KSM-K16) (Alkalihalobacillus clausii) protein is Holliday junction branch migration complex subunit RuvA.